The sequence spans 357 residues: Uroporphyrinogen decarboxylase (357 aa).

Substrate-binding positions include 34-38 (RQAGR), D83, Y158, S213, and H336.

It belongs to the uroporphyrinogen decarboxylase family. Homodimer.

Its subcellular location is the cytoplasm. The catalysed reaction is uroporphyrinogen III + 4 H(+) = coproporphyrinogen III + 4 CO2. It participates in porphyrin-containing compound metabolism; protoporphyrin-IX biosynthesis; coproporphyrinogen-III from 5-aminolevulinate: step 4/4. In terms of biological role, catalyzes the decarboxylation of four acetate groups of uroporphyrinogen-III to yield coproporphyrinogen-III. The sequence is that of Uroporphyrinogen decarboxylase from Mycolicibacterium paratuberculosis (strain ATCC BAA-968 / K-10) (Mycobacterium paratuberculosis).